Consider the following 265-residue polypeptide: NAD kinase (265 aa).

The Proton acceptor role is filled by aspartate 45. Residues 45–46 (DG), 122–123 (NE), arginine 148, aspartate 150, 161–166 (TAYNKS), alanine 185, and glutamine 223 contribute to the NAD(+) site.

Belongs to the NAD kinase family. The cofactor is a divalent metal cation.

The protein localises to the cytoplasm. It carries out the reaction NAD(+) + ATP = ADP + NADP(+) + H(+). Its function is as follows. Involved in the regulation of the intracellular balance of NAD and NADP, and is a key enzyme in the biosynthesis of NADP. Catalyzes specifically the phosphorylation on 2'-hydroxyl of the adenosine moiety of NAD to yield NADP. This is NAD kinase from Enterococcus faecalis (strain ATCC 700802 / V583).